The chain runs to 201 residues: Imidazole glycerol phosphate synthase subunit HisH (201 aa).

Residues 1–201 (MVFIADYGAG…LKVLANFAEL (201 aa)) enclose the Glutamine amidotransferase type-1 domain. C79 serves as the catalytic Nucleophile. Residues H183 and E185 contribute to the active site.

Heterodimer of HisH and HisF.

The protein localises to the cytoplasm. It carries out the reaction 5-[(5-phospho-1-deoxy-D-ribulos-1-ylimino)methylamino]-1-(5-phospho-beta-D-ribosyl)imidazole-4-carboxamide + L-glutamine = D-erythro-1-(imidazol-4-yl)glycerol 3-phosphate + 5-amino-1-(5-phospho-beta-D-ribosyl)imidazole-4-carboxamide + L-glutamate + H(+). The enzyme catalyses L-glutamine + H2O = L-glutamate + NH4(+). It participates in amino-acid biosynthesis; L-histidine biosynthesis; L-histidine from 5-phospho-alpha-D-ribose 1-diphosphate: step 5/9. Its function is as follows. IGPS catalyzes the conversion of PRFAR and glutamine to IGP, AICAR and glutamate. The HisH subunit catalyzes the hydrolysis of glutamine to glutamate and ammonia as part of the synthesis of IGP and AICAR. The resulting ammonia molecule is channeled to the active site of HisF. This chain is Imidazole glycerol phosphate synthase subunit HisH, found in Chlorobium chlorochromatii (strain CaD3).